Consider the following 445-residue polypeptide: Probable D-serine dehydratase (445 aa).

The residue at position 111 (Lys-111) is an N6-(pyridoxal phosphate)lysine.

The protein belongs to the serine/threonine dehydratase family. DsdA subfamily. Pyridoxal 5'-phosphate serves as cofactor.

The enzyme catalyses D-serine = pyruvate + NH4(+). The protein is Probable D-serine dehydratase of Burkholderia pseudomallei (strain K96243).